Consider the following 422-residue polypeptide: PHAF1 protein T01G9.2 (422 aa).

This sequence belongs to the PHAF1 family.

It localises to the cytoplasm. It is found in the preautophagosomal structure. Functionally, may play a regulatory role in autophagic activity. This is PHAF1 protein T01G9.2 from Caenorhabditis elegans.